We begin with the raw amino-acid sequence, 99 residues long: Bacterial microcompartment protein homohexamer (99 aa).

Residues 4–88 (ALGMIEVRGF…PHVNVDAALP (85 aa)) enclose the BMC domain.

Belongs to the bacterial microcompartments protein family. Homohexamer with a small central pore. When purified protein is examined by atomic force microscopy it dynamically makes uniform patches about 35 Angstroms thick with hexamers in the same orientation. In the BMC the concave side faces outward, with the N- and C-terminii exposed to the cytoplasm.

Its subcellular location is the bacterial microcompartment. Functionally, the only hexameric shell protein in this bacterium, it forms the majority of the bacterial microcompartment (BMC) shell. Expression of 5 proteins in E.coli (BMC-H (Hoch_5815), BMC-P (Hoch_5814), and 3 BMC-T (Hoch_5812, Hoch_5816, Hoch_3341)) forms a 40 nm artificial BMC with a molecular mass of 6.5 MDa. There are 60 BMC-H hexamers per BMC. The shell facets are 20-30 Angstroms thick (a single hexamer layer), with 1 of BMC-T trimers protruding to the exterior. The polypeptide is Bacterial microcompartment protein homohexamer (Haliangium ochraceum (strain DSM 14365 / JCM 11303 / SMP-2)).